The following is a 502-amino-acid chain: High affinity nitrate transporter 2.5 (502 aa).

12 helical membrane passes run W51–I71, I87–F107, L111–K131, P133–T153, I172–F192, I208–G228, W264–I284, G300–F320, L334–I354, I361–V381, V393–F413, and G423–F443. A disordered region spans residues L477–T502.

It belongs to the major facilitator superfamily. Nitrate/nitrite porter (TC 2.A.1.8) family. Oligomeric molecular complex with NRT3.1. Expressed in roots, shoots and seeds. Expressed in leaves. Expressed in root hair zone of the primary root and the lateral roots, but not in the lateral root tip or in older parts of the roots. Detected mainly in the epidermis and the cortex. Expressed in shoots only in higher-order veins.

It localises to the cell membrane. In terms of biological role, nitrate transporter involved in the constitutive high-affinity transport system (cHATS) under long-term N starvation conditions. Predominantly expressed in roots of nitrate-deprived plants as a 150 kDa molecular complex with NRT3.1 representing the major contributor to cHATS influx. The principal role of this cHATS is to enable roots previously deprived of nitrate to absorb this ion and initiate induction of nitrate-inducible genes. Not involved in transfer of nitrate from roots to shoots. Contributes to phloem loading of nitrate in shoots during N starvation, but not required for growth and nitrate uptake in young plants. Required for the nitrate uptake-independent plant growth promotion and lateral root response to the rhizospheric Phyllobacterium. Might be involved in the transfer of nitrate from stored pools to cytoplasm. The chain is High affinity nitrate transporter 2.5 (NRT2.5) from Arabidopsis thaliana (Mouse-ear cress).